The chain runs to 386 residues: NADH-ubiquinone oxidoreductase 49 kDa subunit homolog (386 aa).

The protein belongs to the complex I 49 kDa subunit family.

The protein localises to the mitochondrion. The catalysed reaction is a ubiquinone + NADH + 5 H(+)(in) = a ubiquinol + NAD(+) + 4 H(+)(out). Its function is as follows. Core subunit of the mitochondrial membrane respiratory chain NADH dehydrogenase (Complex I) that is believed to belong to the minimal assembly required for catalysis. Complex I functions in the transfer of electrons from NADH to the respiratory chain. The immediate electron acceptor for the enzyme is believed to be ubiquinone. Component of the iron-sulfur (IP) fragment of the enzyme. Component of the iron-sulfur (IP) fragment of the enzyme. This is NADH-ubiquinone oxidoreductase 49 kDa subunit homolog (NAD7) from Trypanosoma brucei brucei.